Here is a 255-residue protein sequence, read N- to C-terminus: Expansin-A25 (255 aa).

An N-terminal signal peptide occupies residues 1-26 (MEYAILFATSLVITVLAASGFAPAHG). An Expansin-like EG45 domain is found at 45 to 160 (GGACGYGNLY…QQVKCWRQGG (116 aa)). The region spanning 170–249 (FFELVLVSNV…WWSFGMTFTS (80 aa)) is the Expansin-like CBD domain.

It belongs to the expansin family. Expansin A subfamily. In terms of tissue distribution, expressed in panicles and flowers.

The protein localises to the secreted. The protein resides in the cell wall. It is found in the membrane. Its function is as follows. May cause loosening and extension of plant cell walls by disrupting non-covalent bonding between cellulose microfibrils and matrix glucans. No enzymatic activity has been found. May be required for rapid internodal elongation in deepwater rice during submergence. This chain is Expansin-A25 (EXPA25), found in Oryza sativa subsp. japonica (Rice).